A 138-amino-acid chain; its full sequence is Secreted RxLR effector protein 91 (138 aa).

The signal sequence occupies residues 1–18 (MVIPHIICLPMALHLWTC). A RxLR motif is present at residues 34 to 37 (RRLR). Asparagine 93 carries N-linked (GlcNAc...) asparagine glycosylation.

This sequence belongs to the RxLR effector family.

It is found in the secreted. It localises to the host nucleus. Its function is as follows. Secreted effector that completely suppresses the host cell death induced by cell death-inducing proteins. The polypeptide is Secreted RxLR effector protein 91 (Plasmopara viticola (Downy mildew of grapevine)).